We begin with the raw amino-acid sequence, 424 residues long: S-phase kinase-associated protein 2 (424 aa).

The segment at 52–73 is disordered; the sequence is PHGLLSNLGHPQSPPRKRVKGK. Serine 64 is subject to Phosphoserine. The short motif at 67–73 is the Nuclear localization signal element; it reads RKRVKGK. An N6-acetyllysine; by p300/EP300 mark is found at lysine 68 and lysine 71. Serine 75 is subject to Phosphoserine. The region spanning 94–140 is the F-box domain; it reads GVSWDSLPDELLLGIFSCLCLPELLRVSGVCKRWYRLSLDESLWQSL. LRR repeat units lie at residues 151–176, 177–204, 210–234, 235–257, 258–284, 286–308, 309–330, 334–356, 359–378, and 380–401; these read VTVR…PLGE, SFSS…ILSE, NLSL…NLVR, LNLC…SCSR, LDEL…LPNT, TQLN…IIKR, CPNL…CFPE, LNYL…LLEL, IPTL…TLQL, and REAL…RPTM. Serine 179 carries the phosphoserine modification.

In terms of assembly, part of a SCF(SKP2) complex consisting of CUL1, RBX1, SKP1 and SKP2. Component of a SCF(SKP2)-like complex containing CUL1, SKP1, TRIM21 and SKP2. Interacts directly with CUL1 and SKP1. Interacts with ASB2 which is the substrate-recognition component of a probable ECS E3 ubiquitin-protein ligase complex; ASB2 is likely to bridge the formation of dimeric E3-ubiquitin-protein ligase complexes composed of an ECS complex and an SCF(SKP2) complex. Interacts with CKS1. Interacts with the cyclin-A-CDK2 complex. Interacts with ORC1, phosphorylated CDT1, phosphorylated RBL2, ELF4, phosphorylated RAG2, FOXO1, UBP43, MYC, TOB1, TAL1 and KMT2A/MLL1. Interacts with TRIM21. Interacts with cyclin-E. Interacts with CARM1. In terms of processing, phosphorylated on serine and threonine resudues in response to DNA damage, promoting 'Lys-63'-linked ubiquitination of NBN. Post-translationally, ubiquitinated by the APC/C complex, leading to its degradation by the proteasome. Deubiquitinated by USP13. Acetylation at Lys-68 and Lys-71 increases stability through impairment of APC/C-mediated proteolysis and promotes cytoplasmic retention. Deacetylated by SIRT3.

It localises to the cytoplasm. The protein resides in the nucleus. It functions in the pathway protein modification; protein ubiquitination. Substrate recognition component of a SCF (SKP1-CUL1-F-box protein) E3 ubiquitin-protein ligase complex which mediates the ubiquitination and subsequent proteasomal degradation of target proteins involved in cell cycle progression, signal transduction and transcription. Specifically recognizes phosphorylated CDKN1B/p27kip and is involved in regulation of G1/S transition. Degradation of CDKN1B/p27kip also requires CKS1. Recognizes target proteins ORC1, CDT1, RBL2, KMT2A/MLL1, CDK9, RAG2, NBN, FOXO1, UBP43, YTHDF2, and probably MYC, TOB1 and TAL1. Degradation of TAL1 also requires STUB1. Recognizes CDKN1A in association with CCNE1 or CCNE2 and CDK2. Promotes ubiquitination and destruction of CDH1 in a CK1-dependent manner, thereby regulating cell migration. Following phosphorylation in response to DNA damage, mediates 'Lys-63'-linked ubiquitination of NBN, promoting ATM recruitment to DNA damage sites and DNA repair via homologous recombination. Functionally, through the ubiquitin-mediated proteasomal degradation of viral proteins may have an antiviral activity. This chain is S-phase kinase-associated protein 2 (Skp2), found in Mus musculus (Mouse).